The chain runs to 253 residues: Tabinhibitin 3 (253 aa).

An N-terminal signal peptide occupies residues 1 to 22 (MTLKRIFCAALALIVLQSVASA). One can recognise an SCP domain in the interval 66-209 (LQKTNWLRGV…LKRALFTCNF (144 aa)). The Cell attachment site motif lies at 222–224 (RGD).

This sequence belongs to the CRISP family. Expressed in salivary glands.

The protein localises to the secreted. Inhibits platelet aggregation induced by all agonists tested (ADP, arachidonic acid, the thromboxane A2 analog U46619, thrombin, and snake venom snaclecs (TMVA that activates platelet through GPIB, and stejnulxin that specifically acts through GPVI (GP6))). May act by competing with fibrinogen for binding to glycoprotein IIb/IIIa (ITGA2B/ITGB3). The protein is Tabinhibitin 3 of Tabanus yao (Horsefly).